Reading from the N-terminus, the 363-residue chain is Phosphoribosylformylglycinamidine cyclo-ligase (363 aa).

This sequence belongs to the AIR synthase family.

The protein localises to the cytoplasm. The enzyme catalyses 2-formamido-N(1)-(5-O-phospho-beta-D-ribosyl)acetamidine + ATP = 5-amino-1-(5-phospho-beta-D-ribosyl)imidazole + ADP + phosphate + H(+). It participates in purine metabolism; IMP biosynthesis via de novo pathway; 5-amino-1-(5-phospho-D-ribosyl)imidazole from N(2)-formyl-N(1)-(5-phospho-D-ribosyl)glycinamide: step 2/2. This Brucella anthropi (strain ATCC 49188 / DSM 6882 / CCUG 24695 / JCM 21032 / LMG 3331 / NBRC 15819 / NCTC 12168 / Alc 37) (Ochrobactrum anthropi) protein is Phosphoribosylformylglycinamidine cyclo-ligase.